A 120-amino-acid chain; its full sequence is NAD(P)H-quinone oxidoreductase subunit 3, chloroplastic (120 aa).

The next 3 helical transmembrane spans lie at 9–29 (IFWAFLIISSIIPILAFLISG), 64–84 (MFALVFVVFDVETVFLYPWAM), and 88–108 (VLGVSVFIEALIFVLIPIVGL).

This sequence belongs to the complex I subunit 3 family. NDH is composed of at least 16 different subunits, 5 of which are encoded in the nucleus.

The protein resides in the plastid. Its subcellular location is the chloroplast thylakoid membrane. It carries out the reaction a plastoquinone + NADH + (n+1) H(+)(in) = a plastoquinol + NAD(+) + n H(+)(out). It catalyses the reaction a plastoquinone + NADPH + (n+1) H(+)(in) = a plastoquinol + NADP(+) + n H(+)(out). Its function is as follows. NDH shuttles electrons from NAD(P)H:plastoquinone, via FMN and iron-sulfur (Fe-S) centers, to quinones in the photosynthetic chain and possibly in a chloroplast respiratory chain. The immediate electron acceptor for the enzyme in this species is believed to be plastoquinone. Couples the redox reaction to proton translocation, and thus conserves the redox energy in a proton gradient. The sequence is that of NAD(P)H-quinone oxidoreductase subunit 3, chloroplastic from Ceratophyllum demersum (Rigid hornwort).